We begin with the raw amino-acid sequence, 148 residues long: Large ribosomal subunit protein bL9 (148 aa).

The protein belongs to the bacterial ribosomal protein bL9 family.

Functionally, binds to the 23S rRNA. The polypeptide is Large ribosomal subunit protein bL9 (Syntrophobacter fumaroxidans (strain DSM 10017 / MPOB)).